The sequence spans 342 residues: Cytosolic Fe-S cluster assembly factor NBP35 (342 aa).

A disordered region spans residues 1-45 (MGPSLETPEPVEDVLANPLKQKPQLVAPEPEHCPGPESEQAGTAD). Residues C33, C47, C50, and C56 each contribute to the [4Fe-4S] cluster site. 86-93 (GKGGVGKS) is a binding site for ATP. Residues C259 and C262 each contribute to the [4Fe-4S] cluster site.

This sequence belongs to the Mrp/NBP35 ATP-binding proteins family. NUBP1/NBP35 subfamily. In terms of assembly, heterotetramer of 2 NBP35 and 2 CFD1 chains. Requires [4Fe-4S] cluster as cofactor.

Its subcellular location is the cytoplasm. Its function is as follows. Component of the cytosolic iron-sulfur (Fe/S) protein assembly (CIA) machinery. Required for maturation of extramitochondrial Fe-S proteins. The NBP35-CFD1 heterotetramer forms a Fe-S scaffold complex, mediating the de novo assembly of an Fe-S cluster and its transfer to target apoproteins. This chain is Cytosolic Fe-S cluster assembly factor NBP35, found in Chaetomium globosum (strain ATCC 6205 / CBS 148.51 / DSM 1962 / NBRC 6347 / NRRL 1970) (Soil fungus).